The following is a 406-amino-acid chain: Eukaryotic initiation factor 4A-I (406 aa).

Residues 1-21 (MSASQDSRSRDNGPDGMEPEG) form a disordered region. Ser2 bears the N-acetylserine mark. Ser4 is modified (phosphoserine). Residues 32–60 (DSFDDMNLSESLLRGIYAYGFEKPSAIQQ) carry the Q motif motif. A Helicase ATP-binding domain is found at 63-234 (ILPCIKGYDV…KKFMRDPIRI (172 aa)). 76-83 (AQSGTGKT) is an ATP binding site. Lys118 is subject to N6-acetyllysine. Lys146 participates in a covalent cross-link: Glycyl lysine isopeptide (Lys-Gly) (interchain with G-Cter in SUMO2). Thr158 is subject to Phosphothreonine. Position 174 is an N6-acetyllysine (Lys174). The DEAD box signature appears at 182-185 (DEAD). Lys193 is subject to N6-acetyllysine. Residue Lys225 forms a Glycyl lysine isopeptide (Lys-Gly) (interchain with G-Cter in SUMO2) linkage. Lys238 carries the post-translational modification N6-acetyllysine; alternate. Lys238 participates in a covalent cross-link: Glycyl lysine isopeptide (Lys-Gly) (interchain with G-Cter in SUMO2); alternate. One can recognise a Helicase C-terminal domain in the interval 245-406 (GIRQFYINVE…EMPLNVADLI (162 aa)). Residues Lys309, Lys369, and Lys381 each participate in a glycyl lysine isopeptide (Lys-Gly) (interchain with G-Cter in SUMO2) cross-link.

This sequence belongs to the DEAD box helicase family. eIF4A subfamily. EIF4F is a multi-subunit complex, the composition of which varies with external and internal environmental conditions. It is composed of at least EIF4A, EIF4E and EIF4G1/EIF4G3. Interacts with PAIP1, EIF4E and UPF2. Found in a complex with XPO7, EIF4A1, ARHGAP1, VPS26A, VPS29, VPS35 and SFN. May interact with NOM1. Interacts with PDCD4; this interferes with the interaction between EIF4A and EIF4G. Interacts with RBM4. Interacts with DDX3X in an RNA-independent manner. Interacts with PKP1 (via N-terminus); the interaction promotes EIF4A1 recruitment to the cap-dependent translation complex and EIF4A1 ATPase activity.

It is found in the cytoplasm. The protein resides in the perinuclear region. The protein localises to the cell membrane. It localises to the stress granule. It carries out the reaction ATP + H2O = ADP + phosphate + H(+). In terms of biological role, ATP-dependent RNA helicase which is a subunit of the eIF4F complex involved in cap recognition and is required for mRNA binding to ribosome. In the current model of translation initiation, eIF4A unwinds RNA secondary structures in the 5'-UTR of mRNAs which is necessary to allow efficient binding of the small ribosomal subunit, and subsequent scanning for the initiator codon. As a result, promotes cell proliferation and growth. This Macaca fascicularis (Crab-eating macaque) protein is Eukaryotic initiation factor 4A-I (EIF4A1).